Reading from the N-terminus, the 218-residue chain is Peptide methionine sulfoxide reductase MsrA (218 aa).

Cysteine 54 is an active-site residue.

This sequence belongs to the MsrA Met sulfoxide reductase family.

The catalysed reaction is L-methionyl-[protein] + [thioredoxin]-disulfide + H2O = L-methionyl-(S)-S-oxide-[protein] + [thioredoxin]-dithiol. The enzyme catalyses [thioredoxin]-disulfide + L-methionine + H2O = L-methionine (S)-S-oxide + [thioredoxin]-dithiol. Has an important function as a repair enzyme for proteins that have been inactivated by oxidation. Catalyzes the reversible oxidation-reduction of methionine sulfoxide in proteins to methionine. The polypeptide is Peptide methionine sulfoxide reductase MsrA (Azorhizobium caulinodans (strain ATCC 43989 / DSM 5975 / JCM 20966 / LMG 6465 / NBRC 14845 / NCIMB 13405 / ORS 571)).